A 263-amino-acid polypeptide reads, in one-letter code: Small ribosomal subunit protein uS3 (263 aa).

The region spanning Val-39–Arg-107 is the KH type-2 domain. The segment at Gly-211 to Glu-263 is disordered. The segment covering Thr-219–Arg-240 has biased composition (basic and acidic residues).

Belongs to the universal ribosomal protein uS3 family. As to quaternary structure, part of the 30S ribosomal subunit. Forms a tight complex with proteins S10 and S14.

Its function is as follows. Binds the lower part of the 30S subunit head. Binds mRNA in the 70S ribosome, positioning it for translation. This Bordetella pertussis (strain Tohama I / ATCC BAA-589 / NCTC 13251) protein is Small ribosomal subunit protein uS3.